A 276-amino-acid chain; its full sequence is Large ribosomal subunit protein uL2 (276 aa).

A disordered region spans residues 212-276 (NRHRGIRPQT…KLIISRKKHK (65 aa)). A compositionally biased stretch (basic residues) spans 257 to 276 (YKTRKKKASDKLIISRKKHK).

This sequence belongs to the universal ribosomal protein uL2 family. Part of the 50S ribosomal subunit. Forms a bridge to the 30S subunit in the 70S ribosome.

Functionally, one of the primary rRNA binding proteins. Required for association of the 30S and 50S subunits to form the 70S ribosome, for tRNA binding and peptide bond formation. It has been suggested to have peptidyltransferase activity; this is somewhat controversial. Makes several contacts with the 16S rRNA in the 70S ribosome. The protein is Large ribosomal subunit protein uL2 of Helicobacter pylori (strain HPAG1).